Here is a 36-residue protein sequence, read N- to C-terminus: Pancreatic polypeptide (36 aa).

At Y36 the chain carries Tyrosine amide.

Belongs to the NPY family.

Its subcellular location is the secreted. Its function is as follows. Hormone secreted by pancreatic cells that acts as a regulator of pancreatic and gastrointestinal functions. The chain is Pancreatic polypeptide (PPY) from Anser anser anser (Western greylag goose).